Consider the following 717-residue polypeptide: Serine/threonine-protein kinase STE11 (717 aa).

One can recognise an SAM domain in the interval 20–84 (NDLPFVQLFL…LRKSKSFQRD (65 aa)). The residue at position 323 (serine 323) is a Phosphoserine. The Protein kinase domain occupies 415–712 (WLKGACIGSG…ALELLQHPWL (298 aa)). ATP is bound by residues 421-429 (IGSGSFGSV) and lysine 444. The span at 452 to 466 (NIGVPTDNNKQANSD) shows a compositional bias: polar residues. The disordered stretch occupies residues 452–481 (NIGVPTDNNKQANSDENNEQEEQQEKIEDV). Serine 465 is subject to Phosphoserine. The Proton acceptor role is filled by aspartate 579.

Belongs to the protein kinase superfamily. STE Ser/Thr protein kinase family. MAP kinase kinase kinase subfamily. In terms of assembly, homodimer. Interacts (via SAM domain) with STE50 (via SAM domain). Interacts with PBS2 and SHO1.

It catalyses the reaction L-seryl-[protein] + ATP = O-phospho-L-seryl-[protein] + ADP + H(+). The catalysed reaction is L-threonyl-[protein] + ATP = O-phospho-L-threonyl-[protein] + ADP + H(+). In terms of biological role, serine/threonine protein kinase required for cell-type-specific transcription and signal transduction in yeast. It is thought that it phosphorylates the STE7 protein kinase which itself, phosphorylates the FUS3 and or KSS1 kinases. This chain is Serine/threonine-protein kinase STE11 (STE11), found in Saccharomyces cerevisiae (strain ATCC 204508 / S288c) (Baker's yeast).